The chain runs to 23 residues: Phallacidin proprotein (23 aa).

A propeptide is located at residue Pro1. A cross-link (cyclopeptide (Ala-Pro)) is located at residues 2-8; sequence AWLVDCP. A cross-link (2'-cysteinyl-6'-hydroxytryptophan sulfoxide (Trp-Cys)) is located at residues 3–7; the sequence is WLVDC. A propeptide spanning residues 9 to 23 is cleaved from the precursor; the sequence is CVGDDVNRLLARGEK.

The protein belongs to the MSDIN fungal toxin family. Post-translationally, processed by the macrocyclase-peptidase enzyme POPB to yield a toxic cyclic heptapeptide. POPB first removes 10 residues from the N-terminus. Conformational trapping of the remaining peptide forces the enzyme to release this intermediate rather than proceed to macrocyclization. The enzyme rebinds the remaining peptide in a different conformation and catalyzes macrocyclization of the N-terminal 7 residues.

Major toxin that belongs to the bicyclic heptapeptides called phallotoxins. Although structurally related to amatoxins, phallotoxins have a different mode of action, which is the stabilization of F-actin. Phallotoxins are poisonous when administered parenterally, but not orally because of poor absorption. The polypeptide is Phallacidin proprotein (Amanita fuliginea (East Asian brown death cap)).